Consider the following 369-residue polypeptide: Tetraacyldisaccharide 4'-kinase (369 aa).

52–59 contacts ATP; sequence TVGGTGKT.

This sequence belongs to the LpxK family.

The catalysed reaction is a lipid A disaccharide + ATP = a lipid IVA + ADP + H(+). It participates in glycolipid biosynthesis; lipid IV(A) biosynthesis; lipid IV(A) from (3R)-3-hydroxytetradecanoyl-[acyl-carrier-protein] and UDP-N-acetyl-alpha-D-glucosamine: step 6/6. Functionally, transfers the gamma-phosphate of ATP to the 4'-position of a tetraacyldisaccharide 1-phosphate intermediate (termed DS-1-P) to form tetraacyldisaccharide 1,4'-bis-phosphate (lipid IVA). The chain is Tetraacyldisaccharide 4'-kinase from Parabacteroides distasonis (strain ATCC 8503 / DSM 20701 / CIP 104284 / JCM 5825 / NCTC 11152).